An 89-amino-acid chain; its full sequence is Small ribosomal subunit protein uS14 (89 aa).

The protein belongs to the universal ribosomal protein uS14 family. In terms of assembly, part of the 30S ribosomal subunit. Contacts proteins S3 and S10.

Functionally, binds 16S rRNA, required for the assembly of 30S particles and may also be responsible for determining the conformation of the 16S rRNA at the A site. This chain is Small ribosomal subunit protein uS14, found in Phytoplasma australiense.